The primary structure comprises 64 residues: Disintegrin schistatin (64 aa).

In terms of domain architecture, Disintegrin spans 1–64 (NSVHPCCDPV…PDCPRNRYNV (64 aa)). 4 disulfides stabilise this stretch: Cys6-Cys29, Cys20-Cys26, Cys25-Cys50, and Cys38-Cys57. Residues 42–44 (RGD) carry the Cell attachment site motif.

The protein belongs to the disintegrin family. Dimeric disintegrin subfamily. In terms of assembly, homodimer; disulfide-linked. In terms of tissue distribution, expressed by the venom gland.

It is found in the secreted. In terms of biological role, may bind to both alpha-IIb/beta-3 (ITGA2B/ITGB3) and alpha-V/beta-3 (ITGAV/ITGB3) integrins, and may inhibit platelet aggregation. In Echis carinatus (Saw-scaled viper), this protein is Disintegrin schistatin.